Consider the following 731-residue polypeptide: Unconventional prefoldin RPB5 interactor-like protein (731 aa).

2 coiled-coil regions span residues 91 to 115 and 143 to 176; these read RLKL…KLHT and LAEH…LRKL. Residues 205–217 show a composition bias toward polar residues; sequence PLKSTNESSPKSL. Disordered stretches follow at residues 205-224, 259-302, and 370-396; these read PLKS…EEDE, MSGE…EEEV, and ASEE…TVSE. A coiled-coil region spans residues 220 to 258; sequence EEEDELWKKLEAEEQNEADELSSEAEESLKTTDNLVRQL. The segment covering 285–300 has biased composition (acidic residues); it reads ISEDDGDDDDEGDQEE. Coiled coils occupy residues 357–379 and 452–477; these read DDLQ…EVVE and SIKT…VKEN. Polar residues-rich tracts occupy residues 508-518 and 575-599; these read GAIPSPSSDQS and SQFS…TSND. 3 disordered regions span residues 508 to 527, 567 to 682, and 694 to 731; these read GAIP…KPSD, GSAY…DLRD, and VEKE…LNKT. Residues 611–621 show a composition bias toward basic and acidic residues; the sequence is FYEKYEKDRAK. Polar residues predominate over residues 623 to 644; that stretch reads SKSNSSEGDATDPESATKSILR. The segment covering 661–673 has biased composition (basic residues); the sequence is KKGRKVRNQKKKE. The segment covering 721-731 has biased composition (basic and acidic residues); the sequence is RFKEQRALNKT.

The protein belongs to the RNA polymerase II subunit 5-mediating protein family. As to quaternary structure, interacts with serine/threonine-protein phosphatases flw/PP1beta9C and Pp1-87B with higher affinity for Pp1-87B.

The protein resides in the cytoplasm. Its subcellular location is the chromosome. The protein localises to the nucleus. In terms of biological role, inhibits the activity of serine/threonine-protein phosphatases flw/PP1beta9C and Pp1-87B. Required for germ line cell viability and differentiation, normal transcriptional activity and maintenance of DNA integrity. This Drosophila melanogaster (Fruit fly) protein is Unconventional prefoldin RPB5 interactor-like protein.